The following is a 185-amino-acid chain: ATP-dependent protease subunit HslV (185 aa).

The active site involves Thr-12. The Na(+) site is built by Ala-168, Cys-171, and Thr-174.

This sequence belongs to the peptidase T1B family. HslV subfamily. A double ring-shaped homohexamer of HslV is capped on each side by a ring-shaped HslU homohexamer. The assembly of the HslU/HslV complex is dependent on binding of ATP.

Its subcellular location is the cytoplasm. The enzyme catalyses ATP-dependent cleavage of peptide bonds with broad specificity.. Its activity is regulated as follows. Allosterically activated by HslU binding. Functionally, protease subunit of a proteasome-like degradation complex believed to be a general protein degrading machinery. In Cereibacter sphaeroides (strain KD131 / KCTC 12085) (Rhodobacter sphaeroides), this protein is ATP-dependent protease subunit HslV.